Reading from the N-terminus, the 695-residue chain is Calcium-binding acidic-repeat protein (695 aa).

The or 23 signal peptide spans 1–20; the sequence is MSHLWCWLFLVLCLACLVLS. 6 TSP type-3 repeats span residues 24–38, 47–56, 70–82, 184–196, 202–214, and 248–260; these read KDSD…DEIN, ADSDQDGLTD, KDTD…DGVE, GDSD…DGAE, and KDSD…DEEE. The tract at residues 45-695 is disordered; it reads YNADSDQDGL…TDPWRSDHSV (651 aa). Positions 59-70 are enriched in basic and acidic residues; it reads EVNRHQTHPQDK. Acidic residues-rich tracts occupy residues 271 to 283, 291 to 306, and 313 to 324; these read ADSD…DGEE, PEDP…DGDE, and DPEEDDSDEDGV. 15 TSP type-3 repeats span residues 294 to 308, 317 to 329, 340 to 352, 363 to 375, 379 to 393, 402 to 414, 425 to 437, 470 to 482, 493 to 505, 516 to 528, 539 to 551, 555 to 569, 600 to 609, 623 to 635, and 646 to 658; these read PDSD…DEVN, DDSD…DGAE, EDSD…DGAE, TDSD…DEVA, ADSD…DGAE, KDTD…DGVE, EDTD…DGAE, ADTD…DGAE, GDSD…DAAE, KDSD…DEVR, and RDTDGDGVAD. 2 stretches are compositionally biased toward acidic residues: residues 361–370 and 381–392; these read NDEDSDDDGI and SDGDGLPDEDEV. Acidic residues-rich tracts occupy residues 467–477 and 491–500; these read PNDEDTDDDGL and EDADTDDDGL. Acidic residues predominate over residues 537 to 546; it reads NDGDSDDDGV. Basic and acidic residues predominate over residues 589 to 603; that stretch reads EILKHKTDPRNRDTD. Positions 665–679 are enriched in basic and acidic residues; sequence NAKDGDSDDDGKADG.

The protein resides in the secreted. The protein localises to the endoplasmic reticulum. Its function is as follows. May function as a calcium-binding protein. This Euglena gracilis protein is Calcium-binding acidic-repeat protein.